Reading from the N-terminus, the 25-residue chain is Spinigerin (25 aa).

It localises to the secreted. In terms of biological role, active against Gram-positive bacteria B.megaterium and M.luteus, Gram-negative bacteria E.coli SBS363 and D22, K.pneumoniae, S.typhimurium and P.aeruginosa, yeast C.albicans and filamentous fungi F.culmorum, N.crassa, N.hematococca and T.viridae. Inactive against Gram-positive bacteria B.subtilis, S.pyogenes, B.thuringiensis and S.aureus, Gram-negative bacteria E.cloacae and E.carotovora and filamentous fungus B.bassiana. This chain is Spinigerin, found in Pseudacanthotermes spiniger.